The following is a 378-amino-acid chain: Stimulator of interferon genes protein (378 aa).

Transmembrane regions (helical) follow at residues 21 to 41 (AAFV…EPAD) and 46 to 66 (WLVL…LCSL). S-palmitoyl cysteine attachment occurs at residues C88 and C91. The next 2 membrane-spanning stretches (helical) occupy residues 89–109 (LGCP…YTFL) and 114–134 (GLPF…NILL). Residues 153–339 (FNVAHGLAWS…KHLKQEEKEE (187 aa)) form a cyclic dinucleotide-binding domain (CBD) region. 2',3'-cGAMP contacts are provided by S162, Y167, R238, and T263. 3',3'-c-di-GMP-binding positions include S162, Y167, 238 to 241 (RVYT), and T263. Residues Y167, R238, and T263 each coordinate 2',3'-cUAMP. Residues 339–378 (EVTVGTMGSSGVLESSTLDKEPQLLISGMDQPLPLRTDVF) form a C-terminal tail (CTT) region. Position 354 is a phosphoserine (S354). T355 carries the phosphothreonine modification. The pLxIS motif motif lies at 362–365 (LLIS). S365 is modified (phosphoserine; by TBK1).

This sequence belongs to the STING family. Homodimer; forms a homodimer in absence of cyclic nucleotide (c-di-GMP or cGAMP). Homotetramer; in presence of cyclic nucleotide (c-di-GMP or cGAMP), forms tetramers and higher-order oligomers through side-by-side packing. Interacts (when phosphorylated) with IRF3; following activation and phosphorylation on the pLxIS motif by TBK1, recruits IRF3. Interacts with TBK1; when homodimer, leading to subsequent production of IFN-beta. In terms of processing, phosphorylation by TBK1 leads to activation and production of IFN-beta. Following cyclic nucleotide (c-di-GMP or cGAMP)-binding, activation and translocation from the endoplasmic reticulum, STING1 is phosphorylated by TBK1 at Ser-365 in the pLxIS motif. The phosphorylated pLxIS motif constitutes an IRF3-binding motif, leading to recruitment of the transcription factor IRF3 to induce type-I interferons and other cytokines. In contrast, lacks phosphorylation site at position 357, leading to reduced production of type-I interferons and other cytokines.

The protein resides in the endoplasmic reticulum membrane. It is found in the cytoplasm. It localises to the perinuclear region. Its subcellular location is the endoplasmic reticulum-Golgi intermediate compartment membrane. The protein localises to the golgi apparatus membrane. The protein resides in the cytoplasmic vesicle. It is found in the autophagosome membrane. It localises to the mitochondrion outer membrane. Its subcellular location is the cell membrane. It catalyses the reaction H(+)(in) = H(+)(out). Facilitator of innate immune signaling that acts as a sensor of cytosolic DNA from bacteria and viruses and promotes low production of type I interferon (IFN-alpha and IFN-beta). Compared to other mammals, STING1-dependent type I interferon induction is strongly reduced in bats, suggesting that the cGAS-STING pathway promotes a limited inflammatory response. Innate immune response is triggered in response to non-CpG double-stranded DNA from viruses and bacteria delivered to the cytoplasm. Acts by binding cyclic dinucleotides: recognizes and binds cyclic di-GMP (c-di-GMP), a second messenger produced by bacteria, cyclic UMP-AMP (2',3'-cUAMP), and cyclic GMP-AMP (cGAMP), a messenger produced by CGAS in response to DNA virus in the cytosol. Upon binding to c-di-GMP, cUAMP or cGAMP, STING1 oligomerizes, translocates from the endoplasmic reticulum and is phosphorylated by TBK1 on the pLxIS motif, leading to recruitment and subsequent activation of the transcription factor IRF3 to induce expression of type I interferon and exert a potent anti-viral state. In addition to promote the production of type I interferons, plays a direct role in autophagy. Following cGAMP-binding, STING1 buds from the endoplasmic reticulum into COPII vesicles, which then form the endoplasmic reticulum-Golgi intermediate compartment (ERGIC). The ERGIC serves as the membrane source for WIPI2 recruitment and LC3 lipidation, leading to formation of autophagosomes that target cytosolic DNA or DNA viruses for degradation by the lysosome. Promotes autophagy by acting as a proton channel that directs proton efflux from the Golgi to facilitate MAP1LC3B/LC3B lipidation. The autophagy- and interferon-inducing activities can be uncoupled and autophagy induction is independent of TBK1 phosphorylation. This is Stimulator of interferon genes protein from Rhinolophus ferrumequinum (Greater horseshoe bat).